A 463-amino-acid chain; its full sequence is FAD-dependent monooxygenase nodM (463 aa).

The helical transmembrane segment at 5–25 (EFKVIIVGGSLAGLTLAHCLL) threads the bilayer. 5 residues coordinate FAD: Glu-35, Gly-49, Arg-108, Asp-305, and Ala-318. The chain crosses the membrane as a helical span at residues 438–458 (ILLGFTGVFTSALAMVVLLHI).

Belongs to the paxM FAD-dependent monooxygenase family. It depends on FAD as a cofactor.

It localises to the membrane. The protein operates within secondary metabolite biosynthesis. Functionally, FAD-dependent monooxygenase; part of the gene cluster that mediates the biosynthesis of the indole diterpenes nodulisporic acids (NA). Nodulisporic acid A (NAA) and its chemically modified derivatives are of particular significance because of their highly potent insecticidal activity against blood-feeding arthropods and lack of observable adverse effects on mammals, in particular the tremogenicity associated with the paspaline-derived IDTs is not observed. The geranylgeranyl diphosphate (GGPP) synthase ggs1, localized outside of the cluster, is proposed to catalyze the first step in nodulisporic acid biosynthesis via conversion of farnesyl pyrophosphate and isopentyl pyrophosphate into geranylgeranyl pyrophosphate (GGPP). Condensation of indole-3-glycerol phosphate with GGPP by the prenyl transferase nodC then forms 3-geranylgeranylindole (3-GGI). Epoxidation by the FAD-dependent monooxygenase nodM leads to a single-epoxidized-GGI that is substrate of the terpene cyclase nodB for cyclization to yield emindole SB. The terminal methyl carbon, C28, of emindole SB is then oxidized by the cytochrome P450 monooxygenase nodW to produce nodulisporic acid F (NAF), the pentacyclic core of NAA. NAF is converted to nodulisporic acid E (NAE) via prenylation. This step is probably performed by one of the indole diterpene prenyltransferases nodD1 or nodD2. Several oxidation steps performed by the FAD-linked oxidoreductase nodO and one of the cytochrome P450 monooxygenase nodR, nodX or nodZ further convert NAE to nodulisporic acid D (NAD). NAD is substrate of cytochrome P450 monooxygenase nodJ to produce the precursor of nodulisporic acid C (NAC), converted to NAC by one of the indole diterpene prenyltransferases nodD1 or nodD2. The FAD-dependent monooxygenase nodY2 then oxidizes NAC to nodulisporic acid B (NAB). Finally NAB is converted to NAA by one of the cytochrome P450 monooxygenases nodR, nodX or nodZ. This Hypoxylon pulicicidum protein is FAD-dependent monooxygenase nodM.